Here is a 1162-residue protein sequence, read N- to C-terminus: Reticulon-4 (1162 aa).

At M1 the chain carries N-acetylmethionine. A disordered region spans residues 1-183; the sequence is MEDIDQSSLV…ALPAASEPVI (183 aa). The Cytoplasmic segment spans residues 1-988; the sequence is MEDIDQSSLV…LYWRDIKKTG (988 aa). Phosphoserine occurs at positions 7 and 16. The span at 7–16 shows a compositional bias: low complexity; it reads SSLVSSSADS. Acidic residues predominate over residues 31–54; that stretch reads EPEDEEDEEDEEEEEDDEDLEELE. Residues 85–99 are compositionally biased toward pro residues; sequence PPAPRGPLPAAPPTA. S105 carries the phosphoserine modification. Low complexity predominate over residues 109-127; sequence SPAASAPSLPPAAAVLPSK. S145, S165, S167, S329, and S344 each carry phosphoserine. The residue at position 348 (T348) is a Phosphothreonine. Positions 408-422 are enriched in basic and acidic residues; the sequence is SLEQKGHGKDSESRN. The tract at residues 408–432 is disordered; it reads SLEQKGHGKDSESRNENASFPRTPE. S426 carries the post-translational modification Phosphoserine. At T430 the chain carries Phosphothreonine. Phosphoserine is present on residues S489, S690, S727, S768, and S832. Residues 711-730 are disordered; it reads ELVDDSSPESEPVDLFSDDS. Positions 713–730 are enriched in acidic residues; the sequence is VDDSSPESEPVDLFSDDS. Position 834 is a phosphothreonine (T834). 2 positions are modified to phosphoserine: S857 and S961. In terms of domain architecture, Reticulon spans 975 to 1162; sequence VVDLLYWRDI…KIPGLKRKAE (188 aa). The chain crosses the membrane as a helical span at residues 989–1009; the sequence is VVFGASLFLLLSLTVFSIVSV. Residues 1010–1078 are Lumenal-facing; the sequence is TAYIALALLS…VNSTIKELRR (69 aa). At K1074 the chain carries N6-acetyllysine. Residues 1079 to 1099 form a helical membrane-spanning segment; it reads LFLVDDLVDSLKFAVLMWVFT. Topologically, residues 1100 to 1162 are cytoplasmic; that stretch reads YVGALFNGLT…KIPGLKRKAE (63 aa).

Binds to RTN4R. Interacts with ATL1. Interacts with TMEM170A. Interacts with RTN4IP1. As to quaternary structure, interacts in trans with CNTNAP1. Interacts with REEP5. Interacts with GPR50. Interacts with synaptic plasticity regulator PANTS; the interaction results in enhanced RTN4-mediated inhibition of AMPA receptor clustering. In terms of assembly, homodimer. Interacts with BAD/Bcl-xl and BCL2. Interact with RTN3. Interacts with NGBR. Interacts with SPTLC1. Interacts with GRAMD4. Interacts with CDH5. Interacts with BACE1 and BACE2. Interacts with REEP5. Interacts with RETREG3. Interacts with BACE1 and BACE2. Interacts with TMEM33. Expressed in cardiomyocytes (at protein level). Highly expressed in brain but not deteceted in aorta, femoral and carotid arteries. Main isoform expressed in neurons. In terms of tissue distribution, expressed in cardiomyocytes (at protein level). Expressed in splenocytes, T-cells, B-cells, bone marrow derived dendritic cells and macrophages (at protein level). Expressed in neurons. Highly expressed in endothelial cells and vascular smooth muscle cells, including blood vessels and mesenteric arteries. Expressed in bronchial and alveolar epithelial cells as well as vascular endothelial cells of lungs. As to expression, expressed in B-cells, bone marrow dendritic cells and macrophages (at protein level). Expressed in cardiomyocytes. In terms of tissue distribution, expressed at very low levels in neurons.

The protein localises to the endoplasmic reticulum membrane. It localises to the cell membrane. It is found in the synapse. Its subcellular location is the cell junction. Functionally, required to induce the formation and stabilization of endoplasmic reticulum (ER) tubules. They regulate membrane morphogenesis in the ER by promoting tubular ER production. They influence nuclear envelope expansion, nuclear pore complex formation and proper localization of inner nuclear membrane proteins. However each isoform have specific functions mainly depending on their tissue expression specificities. Developmental neurite growth regulatory factor with a role as a negative regulator of axon-axon adhesion and growth, and as a facilitator of neurite branching. Regulates neurite fasciculation, branching and extension in the developing nervous system. Involved in down-regulation of growth, stabilization of wiring and restriction of plasticity in the adult CNS. Regulates the radial migration of cortical neurons via an RTN4R-LINGO1 containing receptor complex. Acts as a negative regulator of central nervous system angiogenesis. Inhibits spreading, migration and sprouting of primary brain microvascular endothelial cells (MVECs). Also induces the retraction of MVECs lamellipodia and filopodia in a ROCK pathway-dependent manner. In terms of biological role, mainly function in endothelial cells and vascular smooth muscle cells, is also involved in immune system regulation. Modulator of vascular remodeling, promotes the migration of endothelial cells but inhibits the migration of vascular smooth muscle cells. Regulates endothelial sphingolipid biosynthesis with direct effects on vascular function and blood pressure. Inhibits serine palmitoyltransferase, SPTLC1, the rate-limiting enzyme of the novo sphingolipid biosynthetic pathway, thereby controlling production of endothelial sphingosine-1-phosphate (S1P). Required to promote macrophage homing and functions such as cytokine/chemokine gene expression involved in angiogenesis, arteriogenesis and tissue repair. Mediates ICAM1 induced transendothelial migration of leukocytes such as monocytes and neutrophils and acute inflammation. Necessary for immune responses triggered by nucleic acid sensing TLRs, such as TLR9, is required for proper TLR9 location to endolysosomes. Also involved in immune response to LPS. Plays a role in liver regeneration through the modulation of hepatocytes proliferation. Reduces the anti-apoptotic activity of Bcl-xl and Bcl-2. This is likely consecutive to their change in subcellular location, from the mitochondria to the endoplasmic reticulum, after binding and sequestration. With isoform C, inhibits BACE1 activity and amyloid precursor protein processing. Its function is as follows. Regulates cardiomyocyte apoptosis upon hypoxic conditions. With isoform B, inhibits BACE1 activity and amyloid precursor protein processing. The protein is Reticulon-4 of Mus musculus (Mouse).